A 385-amino-acid chain; its full sequence is 1-deoxy-D-xylulose 5-phosphate reductoisomerase (385 aa).

NADPH is bound by residues T10, G11, S12, I13, and N124. 1-deoxy-D-xylulose 5-phosphate is bound at residue K125. E126 contacts NADPH. D150 serves as a coordination point for Mn(2+). 4 residues coordinate 1-deoxy-D-xylulose 5-phosphate: S151, E152, S176, and H199. Mn(2+) is bound at residue E152. G205 serves as a coordination point for NADPH. The 1-deoxy-D-xylulose 5-phosphate site is built by S212, N217, K218, and E221. E221 contacts Mn(2+).

It belongs to the DXR family. The cofactor is Mg(2+). It depends on Mn(2+) as a cofactor.

The catalysed reaction is 2-C-methyl-D-erythritol 4-phosphate + NADP(+) = 1-deoxy-D-xylulose 5-phosphate + NADPH + H(+). It functions in the pathway isoprenoid biosynthesis; isopentenyl diphosphate biosynthesis via DXP pathway; isopentenyl diphosphate from 1-deoxy-D-xylulose 5-phosphate: step 1/6. Catalyzes the NADPH-dependent rearrangement and reduction of 1-deoxy-D-xylulose-5-phosphate (DXP) to 2-C-methyl-D-erythritol 4-phosphate (MEP). The chain is 1-deoxy-D-xylulose 5-phosphate reductoisomerase from Clostridium botulinum (strain Alaska E43 / Type E3).